The primary structure comprises 325 residues: Large ribosomal subunit protein uL4m (325 aa).

The interval A113–P158 is disordered.

This sequence belongs to the universal ribosomal protein uL4 family. As to quaternary structure, component of the mitochondrial large ribosomal subunit (mt-LSU). Mature N.crassa 74S mitochondrial ribosomes consist of a small (37S) and a large (54S) subunit. The 37S small subunit contains a 16S ribosomal RNA (16S mt-rRNA) and 32 different proteins. The 54S large subunit contains a 23S rRNA (23S mt-rRNA) and 42 different proteins.

It localises to the mitochondrion. Its function is as follows. Component of the mitochondrial ribosome (mitoribosome), a dedicated translation machinery responsible for the synthesis of mitochondrial genome-encoded proteins, including at least some of the essential transmembrane subunits of the mitochondrial respiratory chain. The mitoribosomes are attached to the mitochondrial inner membrane and translation products are cotranslationally integrated into the membrane. This is Large ribosomal subunit protein uL4m (yml6) from Neurospora crassa (strain ATCC 24698 / 74-OR23-1A / CBS 708.71 / DSM 1257 / FGSC 987).